Here is a 357-residue protein sequence, read N- to C-terminus: Arginine kinase (357 aa).

The 83-residue stretch at 9-91 (KLEAGFKKLQ…FNPIIEDYHE (83 aa)) folds into the Phosphagen kinase N-terminal domain. Residue 64-66 (GVG) participates in L-arginine binding. Residues 119 to 356 (YVVSTHVRCG…LEMIKMEEAA (238 aa)) enclose the Phosphagen kinase C-terminal domain. Residues 122 to 126 (STHVR) and H185 contribute to the ATP site. An L-arginine-binding site is contributed by E225. R229 is a binding site for ATP. C271 is a binding site for L-arginine. Residues 280 to 284 (RASVH) and 309 to 314 (RGTRGE) each bind ATP.

It belongs to the ATP:guanido phosphotransferase family.

The enzyme catalyses L-arginine + ATP = N(omega)-phospho-L-arginine + ADP + H(+). Catalyzes the reversible transfer of high energy ATP gamma-phosphate group to L-arginine. The protein is Arginine kinase of Polybetes pythagoricus (South American huntsman spider).